A 113-amino-acid polypeptide reads, in one-letter code: Nucleoid-associated protein Syncc9902_0023 (113 aa).

This sequence belongs to the YbaB/EbfC family. In terms of assembly, homodimer.

Its subcellular location is the cytoplasm. It is found in the nucleoid. Binds to DNA and alters its conformation. May be involved in regulation of gene expression, nucleoid organization and DNA protection. The sequence is that of Nucleoid-associated protein Syncc9902_0023 from Synechococcus sp. (strain CC9902).